Consider the following 351-residue polypeptide: Phosphoribosylformylglycinamidine cyclo-ligase (351 aa).

The protein belongs to the AIR synthase family.

It localises to the cytoplasm. It carries out the reaction 2-formamido-N(1)-(5-O-phospho-beta-D-ribosyl)acetamidine + ATP = 5-amino-1-(5-phospho-beta-D-ribosyl)imidazole + ADP + phosphate + H(+). Its pathway is purine metabolism; IMP biosynthesis via de novo pathway; 5-amino-1-(5-phospho-D-ribosyl)imidazole from N(2)-formyl-N(1)-(5-phospho-D-ribosyl)glycinamide: step 2/2. The polypeptide is Phosphoribosylformylglycinamidine cyclo-ligase (Burkholderia ambifaria (strain ATCC BAA-244 / DSM 16087 / CCUG 44356 / LMG 19182 / AMMD) (Burkholderia cepacia (strain AMMD))).